The sequence spans 501 residues: L-arabinose isomerase (501 aa).

Residues E306, E333, H350, and H450 each coordinate Mn(2+).

The protein belongs to the arabinose isomerase family. As to quaternary structure, homohexamer. Requires Mn(2+) as cofactor.

The enzyme catalyses beta-L-arabinopyranose = L-ribulose. It functions in the pathway carbohydrate degradation; L-arabinose degradation via L-ribulose; D-xylulose 5-phosphate from L-arabinose (bacterial route): step 1/3. In terms of biological role, catalyzes the conversion of L-arabinose to L-ribulose. The sequence is that of L-arabinose isomerase from Serratia proteamaculans (strain 568).